Reading from the N-terminus, the 544-residue chain is CTP synthase (544 aa).

The interval 1-266 (MIRYIFITGG…DSEVLSHFGI (266 aa)) is amidoligase domain. S13 contributes to the CTP binding site. S13 provides a ligand contact to UTP. ATP-binding positions include 14-19 (SLGKGI) and D71. 2 residues coordinate Mg(2+): D71 and E140. CTP is bound by residues 147–149 (DIE), 187–192 (KTKPTQ), and K223. Residues 187–192 (KTKPTQ) and K223 contribute to the UTP site. 239–241 (RDV) contacts ATP. Positions 292-543 (TIGLVGKYTD…IAAAVKQSRL (252 aa)) constitute a Glutamine amidotransferase type-1 domain. G355 is a binding site for L-glutamine. The active-site Nucleophile; for glutamine hydrolysis is C382. L-glutamine is bound by residues 383 to 386 (YGMQ), E406, and R471. Active-site residues include H516 and E518.

The protein belongs to the CTP synthase family. Homotetramer.

It catalyses the reaction UTP + L-glutamine + ATP + H2O = CTP + L-glutamate + ADP + phosphate + 2 H(+). The catalysed reaction is L-glutamine + H2O = L-glutamate + NH4(+). The enzyme catalyses UTP + NH4(+) + ATP = CTP + ADP + phosphate + 2 H(+). Its pathway is pyrimidine metabolism; CTP biosynthesis via de novo pathway; CTP from UDP: step 2/2. Its activity is regulated as follows. Allosterically activated by GTP, when glutamine is the substrate; GTP has no effect on the reaction when ammonia is the substrate. The allosteric effector GTP functions by stabilizing the protein conformation that binds the tetrahedral intermediate(s) formed during glutamine hydrolysis. Inhibited by the product CTP, via allosteric rather than competitive inhibition. Its function is as follows. Catalyzes the ATP-dependent amination of UTP to CTP with either L-glutamine or ammonia as the source of nitrogen. Regulates intracellular CTP levels through interactions with the four ribonucleotide triphosphates. This Hyphomonas neptunium (strain ATCC 15444) protein is CTP synthase.